The following is a 332-amino-acid chain: Protein EXORDIUM-like 6 (332 aa).

An N-terminal signal peptide occupies residues 1–27 (MAMASASSSSSSISVIIFLLLAPLCLS). 3 N-linked (GlcNAc...) asparagine glycosylation sites follow: N36, N102, and N143.

It belongs to the EXORDIUM family.

It localises to the secreted. It is found in the extracellular space. The protein localises to the apoplast. Its function is as follows. May play a role in a brassinosteroid-dependent regulation of growth and development. The protein is Protein EXORDIUM-like 6 (EXL6) of Arabidopsis thaliana (Mouse-ear cress).